Here is a 427-residue protein sequence, read N- to C-terminus: Adenylosuccinate synthetase (427 aa).

Residues 12 to 18 (GDEGKGK) and 40 to 42 (GHT) each bind GTP. The Proton acceptor role is filled by Asp13. Positions 13 and 40 each coordinate Mg(2+). IMP contacts are provided by residues 13–16 (DEGK), 38–41 (NAGH), Thr128, Arg142, Gln223, Thr238, and Arg302. The active-site Proton donor is His41. Substrate is bound at residue 298–304 (TTTGRPR). GTP contacts are provided by residues Arg304, 330-332 (SID), and 412-414 (SVG).

Belongs to the adenylosuccinate synthetase family. As to quaternary structure, homodimer. Mg(2+) serves as cofactor.

It localises to the cytoplasm. The catalysed reaction is IMP + L-aspartate + GTP = N(6)-(1,2-dicarboxyethyl)-AMP + GDP + phosphate + 2 H(+). It participates in purine metabolism; AMP biosynthesis via de novo pathway; AMP from IMP: step 1/2. In terms of biological role, plays an important role in the de novo pathway of purine nucleotide biosynthesis. Catalyzes the first committed step in the biosynthesis of AMP from IMP. The protein is Adenylosuccinate synthetase of Staphylococcus aureus (strain MW2).